The sequence spans 128 residues: Iron-sulfur cluster insertion protein ErpA (128 aa).

Iron-sulfur cluster contacts are provided by cysteine 56, cysteine 120, and cysteine 122.

The protein belongs to the HesB/IscA family. Homodimer. The cofactor is iron-sulfur cluster.

Functionally, required for insertion of 4Fe-4S clusters for at least IspG. This Xanthomonas oryzae pv. oryzae (strain MAFF 311018) protein is Iron-sulfur cluster insertion protein ErpA.